Here is a 1186-residue protein sequence, read N- to C-terminus: DNA-directed RNA polymerase subunit beta (1186 aa).

The segment at 1149–1186 (KEEDDDPSTSSDDLGFNIGARPDAAAKEDQVAEEPEFQ) is disordered.

The protein belongs to the RNA polymerase beta chain family. In terms of assembly, the RNAP catalytic core consists of 2 alpha, 1 beta, 1 beta' and 1 omega subunit. When a sigma factor is associated with the core the holoenzyme is formed, which can initiate transcription.

It catalyses the reaction RNA(n) + a ribonucleoside 5'-triphosphate = RNA(n+1) + diphosphate. Its function is as follows. DNA-dependent RNA polymerase catalyzes the transcription of DNA into RNA using the four ribonucleoside triphosphates as substrates. In Bifidobacterium adolescentis (strain ATCC 15703 / DSM 20083 / NCTC 11814 / E194a), this protein is DNA-directed RNA polymerase subunit beta.